The sequence spans 744 residues: Phosphoribosylformylglycinamidine synthase subunit PurL (744 aa).

His-45 is an active-site residue. Residues Tyr-48 and Lys-87 each contribute to the ATP site. Glu-89 contacts Mg(2+). Substrate is bound by residues 90-93 (SHNH) and Arg-112. His-91 acts as the Proton acceptor in catalysis. Asp-113 lines the Mg(2+) pocket. Substrate is bound at residue Gln-236. Asp-264 contributes to the Mg(2+) binding site. 308–310 (ESQ) is a substrate binding site. Residues Asn-492 and Gly-529 each coordinate ATP. Asn-530 is a Mg(2+) binding site. Ser-532 is a substrate binding site.

Belongs to the FGAMS family. As to quaternary structure, monomer. Part of the FGAM synthase complex composed of 1 PurL, 1 PurQ and 2 PurS subunits.

Its subcellular location is the cytoplasm. It catalyses the reaction N(2)-formyl-N(1)-(5-phospho-beta-D-ribosyl)glycinamide + L-glutamine + ATP + H2O = 2-formamido-N(1)-(5-O-phospho-beta-D-ribosyl)acetamidine + L-glutamate + ADP + phosphate + H(+). Its pathway is purine metabolism; IMP biosynthesis via de novo pathway; 5-amino-1-(5-phospho-D-ribosyl)imidazole from N(2)-formyl-N(1)-(5-phospho-D-ribosyl)glycinamide: step 1/2. Its function is as follows. Part of the phosphoribosylformylglycinamidine synthase complex involved in the purines biosynthetic pathway. Catalyzes the ATP-dependent conversion of formylglycinamide ribonucleotide (FGAR) and glutamine to yield formylglycinamidine ribonucleotide (FGAM) and glutamate. The FGAM synthase complex is composed of three subunits. PurQ produces an ammonia molecule by converting glutamine to glutamate. PurL transfers the ammonia molecule to FGAR to form FGAM in an ATP-dependent manner. PurS interacts with PurQ and PurL and is thought to assist in the transfer of the ammonia molecule from PurQ to PurL. The chain is Phosphoribosylformylglycinamidine synthase subunit PurL from Erythrobacter litoralis (strain HTCC2594).